The primary structure comprises 911 residues: Valine--tRNA ligase (911 aa).

Residues 57-67 (PTVSGSLHVGH) carry the 'HIGH' region motif. A 'KMSKS' region motif is present at residues 599–603 (KMSKS). Lysine 602 contributes to the ATP binding site. The segment at 882-911 (EESAAEGTPETEVAVEASELGEPPAKKPKH) is disordered.

Belongs to the class-I aminoacyl-tRNA synthetase family. ValS type 2 subfamily. As to quaternary structure, monomer.

Its subcellular location is the cytoplasm. The enzyme catalyses tRNA(Val) + L-valine + ATP = L-valyl-tRNA(Val) + AMP + diphosphate. Catalyzes the attachment of valine to tRNA(Val). As ValRS can inadvertently accommodate and process structurally similar amino acids such as threonine, to avoid such errors, it has a 'posttransfer' editing activity that hydrolyzes mischarged Thr-tRNA(Val) in a tRNA-dependent manner. The sequence is that of Valine--tRNA ligase from Bifidobacterium longum (strain NCC 2705).